The sequence spans 98 residues: PsbF-like protein (98 aa).

The next 2 membrane-spanning stretches (helical) occupy residues 5–25 and 73–93; these read VLLVISPIIFAWIFTVFWLGK and TAAVNALGIPTVFFLGAILAM.

The protein belongs to the PsbE/PsbF family.

Its subcellular location is the membrane. Its function is as follows. Unknown. Resembles PsbF, one of the subunits of the photosystem II reaction center. However, it encodes asparagine rather than histidine at the site PsbF uses to bind heme. In Prochlorococcus marinus (strain MIT 9312), this protein is PsbF-like protein.